The chain runs to 72 residues: MPSQQDEKRQAAREVIDILHEISTLLNTHLDRTELSLCVSLIENGVNPEALATVIKELRKESSQSRGLVGGE.

Belongs to the MOZART1 family. In terms of assembly, part of the gamma-tubulin complex.

The protein localises to the cytoplasm. It localises to the cytoskeleton. Its subcellular location is the microtubule organizing center. The protein resides in the spindle pole body. Required for gamma-tubulin complex recruitment to the microtubule organizing center (MTOC). This is Mitotic-spindle organizing protein 1 from Coccidioides immitis (strain RS) (Valley fever fungus).